Consider the following 459-residue polypeptide: Putative flavin-containing monooxygenase 2 (459 aa).

FAD-binding positions include 17–21, E38, and 46–47; these read GAGVS and VW. Position 217–220 (217–220) interacts with NADP(+); that stretch reads SAID.

The protein belongs to the FMO family. FAD serves as cofactor.

The polypeptide is Putative flavin-containing monooxygenase 2 (FMO2) (Arabidopsis thaliana (Mouse-ear cress)).